We begin with the raw amino-acid sequence, 197 residues long: Small ribosomal subunit protein uS4B (197 aa).

Positions 88–150 (SRLDNMVYRM…SRKTEMFVNN (63 aa)) constitute an S4 RNA-binding domain.

It belongs to the universal ribosomal protein uS4 family. As to quaternary structure, part of the 30S ribosomal subunit. Contacts protein S5. The interaction surface between S4 and S5 is involved in control of translational fidelity.

Functionally, one of the primary rRNA binding proteins, it binds directly to 16S rRNA where it nucleates assembly of the body of the 30S subunit. Its function is as follows. With S5 and S12 plays an important role in translational accuracy. This is Small ribosomal subunit protein uS4B from Clostridium perfringens (strain SM101 / Type A).